A 64-amino-acid chain; its full sequence is Large ribosomal subunit protein uL30 (64 aa).

This sequence belongs to the universal ribosomal protein uL30 family. As to quaternary structure, part of the 50S ribosomal subunit.

In Bradyrhizobium diazoefficiens (strain JCM 10833 / BCRC 13528 / IAM 13628 / NBRC 14792 / USDA 110), this protein is Large ribosomal subunit protein uL30.